A 590-amino-acid polypeptide reads, in one-letter code: Cytidine monophosphate-N-acetylneuraminic acid hydroxylase (590 aa).

In terms of domain architecture, Rieske spans 14–112 (LSPVEVANLK…VEMDENNGLL (99 aa)). Residues Cys54, His56, Cys75, and His78 each coordinate [2Fe-2S] cluster.

Belongs to the CMP-Neu5Ac hydroxylase family. It depends on [2Fe-2S] cluster as a cofactor.

It is found in the cytoplasm. It catalyses the reaction CMP-N-acetyl-beta-neuraminate + 2 Fe(II)-[cytochrome b5] + O2 + 2 H(+) = CMP-N-glycoloyl-beta-neuraminate + 2 Fe(III)-[cytochrome b5] + H2O. It functions in the pathway amino-sugar metabolism; N-acetylneuraminate metabolism. Functionally, sialic acids are components of carbohydrate chains of glycoconjugates and are involved in cell-cell recognition and cell-pathogen interactions. Catalyzes the conversion of CMP-N-acetylneuraminic acid (CMP-Neu5Ac) into its hydroxylated derivative CMP-N-glycolylneuraminic acid (CMP-Neu5Gc), a sialic acid abundantly expressed at the surface of many cells. The polypeptide is Cytidine monophosphate-N-acetylneuraminic acid hydroxylase (CMAH) (Macaca mulatta (Rhesus macaque)).